The chain runs to 1113 residues: Histone deacetylase 5 (1113 aa).

Residues 1–22 (MNSPNESDGMSGREPSLGILPR) form a disordered region. A Glycyl lysine isopeptide (Lys-Gly) (interchain with G-Cter in SUMO2) cross-link involves residue K35. Disordered stretches follow at residues 39 to 63 (PGAM…RGAL) and 187 to 272 (KEPT…SSPL). The segment covering 238–249 (DSRDDFPLRKTA) has biased composition (basic and acidic residues). S250 is subject to Phosphoserine; by AMPK, CaMK1, SIK1 and PKD/PRKD1. The span at 263-272 (KVAERRSSPL) shows a compositional bias: basic and acidic residues. T283 is subject to Phosphothreonine; by PKC. The disordered stretch occupies residues 472–494 (RTVGKLPRHRPLSRTQSSPLPQS). Low complexity predominate over residues 484–494 (SRTQSSPLPQS). S488 carries the post-translational modification Phosphoserine; by AMPK, CaMK1, SIK1 and PKD/PRKD1. K523 carries the N6-acetyllysine modification. Residues 526–611 (TKTGELSRQP…PDEGPDLEES (86 aa)) form a disordered region. The segment covering 571–610 (STQEDLEEEEEEEEEEEEDCIQVKDEDGESGPDEGPDLEE) has biased composition (acidic residues). 2 positions are modified to phosphoserine: S600 and S650. A histone deacetylase region spans residues 675–1019 (GVVYDTFMLK…VSALLSVELQ (345 aa)). Zn(2+) is bound by residues C687, C689, H695, and C772. Residue H824 is part of the active site. Residues 1072 to 1113 (EEAETVSAMALLSVGAEQAQAVATQEHSPRPAEEPMEQEPAL) carry the Nuclear export signal motif. Positions 1088–1113 (EQAQAVATQEHSPRPAEEPMEQEPAL) are disordered. Position 1099 is a phosphoserine (S1099).

Belongs to the histone deacetylase family. HD type 2 subfamily. Interacts with AHRR, BAHD1, BCOR, HDAC7, HDAC9, CTBP1, MEF2C, NCOR2, NRIP1, PHB2 and a 14-3-3 chaperone protein. Interacts with BCL6, DDIT3/CHOP, GRK5, KDM5B and MYOCD. Interacts with EP300 in the presence of TFAP2C. Interacts with ANKRA2. Interacts with CUL7 (as part of the 3M complex); negatively regulated by ANKRA2. Interacts with ZBTB7B; the interaction allows the recruitment of HDAC4 on CD8 loci for deacetylation and possible inhibition of CD8 genes expression. Interacts with RARA. Phosphorylated by AMPK, CaMK1, SIK1 and PRKD1 at Ser-250 and Ser-488. The phosphorylation is required for the export to the cytoplasm and inhibition. Phosphorylated by the PKC kinases PKN1 and PKN2, impairing nuclear import. Phosphorylated by GRK5, leading to nuclear export of HDAC5 and allowing MEF2-mediated transcription. In terms of processing, ubiquitinated. Polyubiquitination however does not lead to its degradation.

It localises to the nucleus. The protein localises to the cytoplasm. The catalysed reaction is N(6)-acetyl-L-lysyl-[histone] + H2O = L-lysyl-[histone] + acetate. In terms of biological role, responsible for the deacetylation of lysine residues on the N-terminal part of the core histones (H2A, H2B, H3 and H4). Histone deacetylation gives a tag for epigenetic repression and plays an important role in transcriptional regulation, cell cycle progression and developmental events. Histone deacetylases act via the formation of large multiprotein complexes. Involved in muscle maturation by repressing transcription of myocyte enhancer MEF2C. During muscle differentiation, it shuttles into the cytoplasm, allowing the expression of myocyte enhancer factors. Serves as a corepressor of RARA and causes its deacetylation. In association with RARA, plays a role in the repression of microRNA-10a and thereby in the inflammatory response. This chain is Histone deacetylase 5 (Hdac5), found in Mus musculus (Mouse).